Here is a 396-residue protein sequence, read N- to C-terminus: Elongation factor Tu 1 (396 aa).

Residues 10–206 form the tr-type G domain; sequence KPHINVGTIG…VLDSYIPEPQ (197 aa). The segment at 19–26 is G1; it reads GHVDHGKT. Position 19–26 (19–26) interacts with GTP; that stretch reads GHVDHGKT. Thr26 provides a ligand contact to Mg(2+). Residues 60–64 form a G2 region; sequence GITIN. The G3 stretch occupies residues 81-84; it reads DCPG. Residues 81–85 and 136–139 contribute to the GTP site; these read DCPGH and NKAD. Residues 136–139 are G4; sequence NKAD. Residues 174-176 are G5; that stretch reads SAL.

The protein belongs to the TRAFAC class translation factor GTPase superfamily. Classic translation factor GTPase family. EF-Tu/EF-1A subfamily. Monomer.

Its subcellular location is the cytoplasm. It carries out the reaction GTP + H2O = GDP + phosphate + H(+). In terms of biological role, GTP hydrolase that promotes the GTP-dependent binding of aminoacyl-tRNA to the A-site of ribosomes during protein biosynthesis. This chain is Elongation factor Tu 1, found in Nitrosomonas eutropha (strain DSM 101675 / C91 / Nm57).